The following is a 269-amino-acid chain: Malonyl-[acyl-carrier protein] O-methyltransferase (269 aa).

Belongs to the methyltransferase superfamily.

The catalysed reaction is malonyl-[ACP] + S-adenosyl-L-methionine = malonyl-[ACP] methyl ester + S-adenosyl-L-homocysteine. Its pathway is cofactor biosynthesis; biotin biosynthesis. Its function is as follows. Converts the free carboxyl group of a malonyl-thioester to its methyl ester by transfer of a methyl group from S-adenosyl-L-methionine (SAM). It allows to synthesize pimeloyl-ACP via the fatty acid synthetic pathway. This chain is Malonyl-[acyl-carrier protein] O-methyltransferase, found in Bacillus cereus (strain ATCC 14579 / DSM 31 / CCUG 7414 / JCM 2152 / NBRC 15305 / NCIMB 9373 / NCTC 2599 / NRRL B-3711).